The following is a 216-amino-acid chain: Ras-related protein Rab-11A (216 aa).

Gly-2 bears the N-acetylglycine mark. The GTP site is built by Ser-20, Gly-21, Val-22, Gly-23, Lys-24, Ser-25, Asn-26, Asn-37, Leu-38, Ser-40, Ser-42, and Thr-43. Residue Ser-25 participates in Mg(2+) binding. Residues 36–47 (FNLESKSTIGVE) carry the Switch 1 motif. Mg(2+)-binding residues include Thr-43 and Asp-66. The Switch 2 signature appears at 67–86 (TAGQERYRAITSAYYRGAVG). GTP-binding residues include Gly-69, Asn-124, Lys-125, Asp-127, Ala-155, and Leu-156. Positions 183 to 208 (DRRENDMSPSNNVVPIHVPPTTENKP) are disordered. Residues Cys-212 and Cys-213 are each lipidated (S-geranylgeranyl cysteine). Cys-213 carries the post-translational modification Cysteine methyl ester. Positions 214–216 (QNI) are cleaved as a propeptide — removed in mature form.

Belongs to the small GTPase superfamily. Rab family. The cofactor is Mg(2+).

Its subcellular location is the cell membrane. The protein localises to the endosome membrane. It is found in the recycling endosome membrane. The protein resides in the cleavage furrow. It localises to the cytoplasmic vesicle. Its subcellular location is the phagosome. The protein localises to the cytoplasmic vesicle membrane. It is found in the golgi apparatus. The protein resides in the trans-Golgi network. It carries out the reaction GTP + H2O = GDP + phosphate + H(+). With respect to regulation, regulated by guanine nucleotide exchange factors (GEFs) which promote the exchange of bound GDP for free GTP. Regulated by GTPase activating proteins (GAPs) which increase the GTP hydrolysis activity. Inhibited by GDP dissociation inhibitors (GDIs) which prevent Rab-GDP dissociation. The small GTPases Rab are key regulators of intracellular membrane trafficking, from the formation of transport vesicles to their fusion with membranes. Rabs cycle between an inactive GDP-bound form and an active GTP-bound form that is able to recruit to membranes different set of downstream effectors directly responsible for vesicle formation, movement, tethering and fusion. The small Rab GTPase RAB11A regulates endocytic recycling. May also be involved in the regulation of preciliary trafficking and neosynthesized protein export. The protein is Ras-related protein Rab-11A (RAB11A) of Gallus gallus (Chicken).